Here is a 121-residue protein sequence, read N- to C-terminus: UPF0102 protein BHWA1_02005 (121 aa).

Belongs to the UPF0102 family.

The protein is UPF0102 protein BHWA1_02005 of Brachyspira hyodysenteriae (strain ATCC 49526 / WA1).